Reading from the N-terminus, the 73-residue chain is UPF0499 protein CHGG_06021 (73 aa).

Positions 1–20 (MKSSIHVVLFFLLSLVASMA) are cleaved as a signal peptide. Cystine bridges form between Cys-41–Cys-55, Cys-48–Cys-60, and Cys-54–Cys-69.

This sequence belongs to the UPF0499 family.

Its subcellular location is the secreted. This Chaetomium globosum (strain ATCC 6205 / CBS 148.51 / DSM 1962 / NBRC 6347 / NRRL 1970) (Soil fungus) protein is UPF0499 protein CHGG_06021.